A 211-amino-acid polypeptide reads, in one-letter code: Small ribosomal subunit protein uS3 (211 aa).

The KH type-2 domain occupies 16–85 (IDEYFKTKLV…NPQIEVKQVE (70 aa)).

The protein belongs to the universal ribosomal protein uS3 family. As to quaternary structure, part of the 30S ribosomal subunit.

In terms of biological role, binds the lower part of the 30S subunit head. This Methanococcus maripaludis (strain C5 / ATCC BAA-1333) protein is Small ribosomal subunit protein uS3.